The sequence spans 702 residues: MPALAFVDTPIDTFSSIFTPSSVSTAVVDGSCHWSPSLSSSLYRIDGWGAPYFAANSSGNISVRPHGSNTLPHQDIDLMKVVKKVTDPSGLGLQLPLIVRFPDVLKNRLECLQSAFDYAIQSQGYDSHYQGVYPVKCNQDRFIIEDIVEFGSGFRFGLEAGSKPEILLAMSCLCKGNPEAFLVCNGFKDSEYISLALFGRKLELNTVIVLEQEEELDLVIDLSQKMNVRPVIGLRAKLRTKHSGHFGSTSGEKGKFGLTTVQILRVVRKLSQVGMLDCLQLLHFHIGSQIPSTALLSDGVAEAAQLYCELVRLGAHMKVIDIGGGLGIDYDGSKSGESDLSVAYSLEEYAAAVVASVRFVCDQKSVKHPVICSESGRAIVSHHSVLIFEAVSAGQQHETPTDHQFMLEGYSEEVRGDYENLYGAAMRGDRESCLLYVDQLKQRCVEGFKEGSLGIEQLAGVDGLCEWVIKAIGASDPVLTYHVNLSVFTSIPDFWGIDQLFPIVPIHKLDQRPAARGILSDLTCDSDGKINKFIGGESSLPLHEMDNNGCSGGRYYLGMFLGGAYEEALGGVHNLFGGPSVVRVLQSDGPHGFAVTRAVMGQSSADVLRAMQHEPELMFQTLKHRAEEPRNNNNKACGDKGNDKLVVASCLAKSFNNMPYLSMETSTNALTAAVNNLGVYYCDEAAAGGGGKGKDENWSYFG.

Residues 1 to 52 (MPALAFVDTPIDTFSSIFTPSSVSTAVVDGSCHWSPSLSSSLYRIDGWGAPY) constitute a chloroplast transit peptide. Lys136 is subject to N6-(pyridoxal phosphate)lysine. Pyridoxal 5'-phosphate is bound by residues Ser288, Gly325, and 374-377 (ESGR). 320–330 (IDIGGGLGIDY) provides a ligand contact to substrate. Substrate is bound at residue 436–437 (YV). Cys524 functions as the Proton donor; shared with dimeric partner in the catalytic mechanism. Position 525 (Asp525) interacts with substrate. Position 565 (Tyr565) interacts with pyridoxal 5'-phosphate.

The protein belongs to the Orn/Lys/Arg decarboxylase class-II family. SpeA subfamily. In terms of assembly, homodimer. Only the dimer is catalytically active, as the active sites are constructed of residues from both monomers. May form a head-to-tail homodimer. Homodimer and heterodimer with ADC2. Requires pyridoxal 5'-phosphate as cofactor. Mg(2+) is required as a cofactor.

The protein localises to the plastid. It is found in the chloroplast. The protein resides in the cytoplasm. It localises to the cytosol. It catalyses the reaction L-arginine + H(+) = agmatine + CO2. Its pathway is amine and polyamine biosynthesis; agmatine biosynthesis; agmatine from L-arginine: step 1/1. Its function is as follows. Required for the biosynthesis of putrescine. Catalyzes the first step of polyamine (PA) biosynthesis to produce putrescine from arginine. Is a minor contributor to basal arginine decarboxylase (ADC) activity and putrescine biosynthesis. Accumulation of putrescine plays a positive role in freezing tolerance. Production of polyamines is essential for normal seed development. Controls PA homeostasis which is crucial for normal plant growth and development. The chain is Arginine decarboxylase 1, chloroplastic from Arabidopsis thaliana (Mouse-ear cress).